The primary structure comprises 149 residues: Large ribosomal subunit protein bL9 (149 aa).

The protein belongs to the bacterial ribosomal protein bL9 family.

In terms of biological role, binds to the 23S rRNA. This chain is Large ribosomal subunit protein bL9, found in Ligilactobacillus salivarius (strain UCC118) (Lactobacillus salivarius).